Reading from the N-terminus, the 463-residue chain is ATP synthase subunit beta (463 aa).

152–159 (GGAGVGKT) contacts ATP.

This sequence belongs to the ATPase alpha/beta chains family. F-type ATPases have 2 components, CF(1) - the catalytic core - and CF(0) - the membrane proton channel. CF(1) has five subunits: alpha(3), beta(3), gamma(1), delta(1), epsilon(1). CF(0) has three main subunits: a(1), b(2) and c(9-12). The alpha and beta chains form an alternating ring which encloses part of the gamma chain. CF(1) is attached to CF(0) by a central stalk formed by the gamma and epsilon chains, while a peripheral stalk is formed by the delta and b chains.

The protein localises to the cell inner membrane. The catalysed reaction is ATP + H2O + 4 H(+)(in) = ADP + phosphate + 5 H(+)(out). Produces ATP from ADP in the presence of a proton gradient across the membrane. The catalytic sites are hosted primarily by the beta subunits. The sequence is that of ATP synthase subunit beta from Shewanella putrefaciens (strain CN-32 / ATCC BAA-453).